A 386-amino-acid polypeptide reads, in one-letter code: Succinyl-diaminopimelate desuccinylase (386 aa).

H77 is a Zn(2+) binding site. D79 is an active-site residue. Zn(2+) is bound at residue D110. E144 acts as the Proton acceptor in catalysis. Residues E145, E173, and H359 each coordinate Zn(2+).

The protein belongs to the peptidase M20A family. DapE subfamily. As to quaternary structure, homodimer. Requires Zn(2+) as cofactor. The cofactor is Co(2+).

It catalyses the reaction N-succinyl-(2S,6S)-2,6-diaminopimelate + H2O = (2S,6S)-2,6-diaminopimelate + succinate. Its pathway is amino-acid biosynthesis; L-lysine biosynthesis via DAP pathway; LL-2,6-diaminopimelate from (S)-tetrahydrodipicolinate (succinylase route): step 3/3. In terms of biological role, catalyzes the hydrolysis of N-succinyl-L,L-diaminopimelic acid (SDAP), forming succinate and LL-2,6-diaminopimelate (DAP), an intermediate involved in the bacterial biosynthesis of lysine and meso-diaminopimelic acid, an essential component of bacterial cell walls. The chain is Succinyl-diaminopimelate desuccinylase from Ralstonia pickettii (strain 12J).